Consider the following 478-residue polypeptide: Probable glycine dehydrogenase (decarboxylating) subunit 2 (478 aa).

K264 is modified (N6-(pyridoxal phosphate)lysine).

This sequence belongs to the GcvP family. C-terminal subunit subfamily. The glycine cleavage system is composed of four proteins: P, T, L and H. In this organism, the P 'protein' is a heterodimer of two subunits. It depends on pyridoxal 5'-phosphate as a cofactor.

It catalyses the reaction N(6)-[(R)-lipoyl]-L-lysyl-[glycine-cleavage complex H protein] + glycine + H(+) = N(6)-[(R)-S(8)-aminomethyldihydrolipoyl]-L-lysyl-[glycine-cleavage complex H protein] + CO2. Functionally, the glycine cleavage system catalyzes the degradation of glycine. The P protein binds the alpha-amino group of glycine through its pyridoxal phosphate cofactor; CO(2) is released and the remaining methylamine moiety is then transferred to the lipoamide cofactor of the H protein. In Endomicrobium trichonymphae, this protein is Probable glycine dehydrogenase (decarboxylating) subunit 2.